Reading from the N-terminus, the 240-residue chain is Pyridoxine 5'-phosphate synthase (240 aa).

Asn7 lines the 3-amino-2-oxopropyl phosphate pocket. Residue 9–10 (DH) participates in 1-deoxy-D-xylulose 5-phosphate binding. A 3-amino-2-oxopropyl phosphate-binding site is contributed by Arg18. Catalysis depends on His43, which acts as the Proton acceptor. 1-deoxy-D-xylulose 5-phosphate is bound by residues Arg45 and His50. Glu70 serves as the catalytic Proton acceptor. Thr100 provides a ligand contact to 1-deoxy-D-xylulose 5-phosphate. The active-site Proton donor is His191. 3-amino-2-oxopropyl phosphate is bound by residues Gly192 and 213 to 214 (GH).

This sequence belongs to the PNP synthase family. In terms of assembly, homooctamer; tetramer of dimers.

The protein resides in the cytoplasm. It catalyses the reaction 3-amino-2-oxopropyl phosphate + 1-deoxy-D-xylulose 5-phosphate = pyridoxine 5'-phosphate + phosphate + 2 H2O + H(+). It functions in the pathway cofactor biosynthesis; pyridoxine 5'-phosphate biosynthesis; pyridoxine 5'-phosphate from D-erythrose 4-phosphate: step 5/5. Catalyzes the complicated ring closure reaction between the two acyclic compounds 1-deoxy-D-xylulose-5-phosphate (DXP) and 3-amino-2-oxopropyl phosphate (1-amino-acetone-3-phosphate or AAP) to form pyridoxine 5'-phosphate (PNP) and inorganic phosphate. The sequence is that of Pyridoxine 5'-phosphate synthase from Gloeothece citriformis (strain PCC 7424) (Cyanothece sp. (strain PCC 7424)).